The chain runs to 293 residues: N-acetylneuraminate lyase (293 aa).

Residues Ser-48 and Ser-49 each coordinate aceneuramate. Tyr-137 functions as the Proton donor in the catalytic mechanism. Lys-165 acts as the Schiff-base intermediate with substrate in catalysis. Aceneuramate-binding residues include Thr-167, Gly-189, Asp-191, Glu-192, and Ser-208.

It belongs to the DapA family. NanA subfamily. Homotetramer.

The protein localises to the cytoplasm. It carries out the reaction aceneuramate = aldehydo-N-acetyl-D-mannosamine + pyruvate. It participates in amino-sugar metabolism; N-acetylneuraminate degradation; D-fructose 6-phosphate from N-acetylneuraminate: step 1/5. In terms of biological role, catalyzes the reversible aldol cleavage of N-acetylneuraminic acid (sialic acid; Neu5Ac) to form pyruvate and N-acetylmannosamine (ManNAc) via a Schiff base intermediate. The sequence is that of N-acetylneuraminate lyase from Staphylococcus aureus (strain MRSA252).